Reading from the N-terminus, the 220-residue chain is Protein-L-isoaspartate O-methyltransferase (220 aa).

The active site involves Ser-68.

Belongs to the methyltransferase superfamily. L-isoaspartyl/D-aspartyl protein methyltransferase family.

It is found in the cytoplasm. It catalyses the reaction [protein]-L-isoaspartate + S-adenosyl-L-methionine = [protein]-L-isoaspartate alpha-methyl ester + S-adenosyl-L-homocysteine. Its function is as follows. Catalyzes the methyl esterification of L-isoaspartyl residues in peptides and proteins that result from spontaneous decomposition of normal L-aspartyl and L-asparaginyl residues. It plays a role in the repair and/or degradation of damaged proteins. The sequence is that of Protein-L-isoaspartate O-methyltransferase from Dictyoglomus turgidum (strain DSM 6724 / Z-1310).